The following is a 184-amino-acid chain: Chromophore lyase CpcS/CpeS 1 (184 aa).

Belongs to the CpcS/CpeS biliprotein lyase family.

Covalently attaches a chromophore to Cys residue(s) of phycobiliproteins. This is Chromophore lyase CpcS/CpeS 1 from Synechococcus sp. (strain JA-3-3Ab) (Cyanobacteria bacterium Yellowstone A-Prime).